The following is a 382-amino-acid chain: Protein RecA (382 aa).

79-86 lines the ATP pocket; it reads GPESSGKT.

Belongs to the RecA family.

It localises to the cytoplasm. Can catalyze the hydrolysis of ATP in the presence of single-stranded DNA, the ATP-dependent uptake of single-stranded DNA by duplex DNA, and the ATP-dependent hybridization of homologous single-stranded DNAs. It interacts with LexA causing its activation and leading to its autocatalytic cleavage. In Streptococcus sanguinis (strain SK36), this protein is Protein RecA.